Reading from the N-terminus, the 481-residue chain is Alkaline protease secretion protein AprF (481 aa).

Residues 462 to 481 (PAPLHTLSKTDTEENRSALN) are disordered. The segment covering 469-481 (SKTDTEENRSALN) has biased composition (basic and acidic residues).

It belongs to the outer membrane factor (OMF) (TC 1.B.17) family.

Its subcellular location is the cell outer membrane. Functionally, involved in the secretion of alkaline protease. This is Alkaline protease secretion protein AprF (aprF) from Pseudomonas aeruginosa (strain ATCC 15692 / DSM 22644 / CIP 104116 / JCM 14847 / LMG 12228 / 1C / PRS 101 / PAO1).